The chain runs to 209 residues: Thymidylate kinase (209 aa).

10-17 is an ATP binding site; that stretch reads GPEGAGKT.

The protein belongs to the thymidylate kinase family.

The catalysed reaction is dTMP + ATP = dTDP + ADP. Phosphorylation of dTMP to form dTDP in both de novo and salvage pathways of dTTP synthesis. The polypeptide is Thymidylate kinase (Anoxybacillus flavithermus (strain DSM 21510 / WK1)).